Here is a 335-residue protein sequence, read N- to C-terminus: Glyceraldehyde-3-phosphate dehydrogenase 1 (335 aa).

NAD(+) is bound by residues 13-14 and G111; that span reads TI. 140 to 142 contacts D-glyceraldehyde 3-phosphate; that stretch reads SCN. The active-site Nucleophile is the C141. R169 contributes to the NAD(+) binding site. Residues T171 and 195–196 each bind D-glyceraldehyde 3-phosphate; that span reads HG. Q300 contributes to the NAD(+) binding site.

The protein belongs to the glyceraldehyde-3-phosphate dehydrogenase family. Homotetramer.

The protein localises to the cytoplasm. The enzyme catalyses D-glyceraldehyde 3-phosphate + phosphate + NADP(+) = (2R)-3-phospho-glyceroyl phosphate + NADPH + H(+). The catalysed reaction is D-glyceraldehyde 3-phosphate + phosphate + NAD(+) = (2R)-3-phospho-glyceroyl phosphate + NADH + H(+). It functions in the pathway carbohydrate degradation; glycolysis; pyruvate from D-glyceraldehyde 3-phosphate: step 1/5. The chain is Glyceraldehyde-3-phosphate dehydrogenase 1 (gapA) from Methanosarcina acetivorans (strain ATCC 35395 / DSM 2834 / JCM 12185 / C2A).